Reading from the N-terminus, the 417-residue chain is Serine hydroxymethyltransferase (417 aa).

Residues L120 and 124 to 126 each bind (6S)-5,6,7,8-tetrahydrofolate; that span reads GHL. N6-(pyridoxal phosphate)lysine is present on K229.

The protein belongs to the SHMT family. In terms of assembly, homodimer. Requires pyridoxal 5'-phosphate as cofactor.

The protein resides in the cytoplasm. The enzyme catalyses (6R)-5,10-methylene-5,6,7,8-tetrahydrofolate + glycine + H2O = (6S)-5,6,7,8-tetrahydrofolate + L-serine. It participates in one-carbon metabolism; tetrahydrofolate interconversion. It functions in the pathway amino-acid biosynthesis; glycine biosynthesis; glycine from L-serine: step 1/1. In terms of biological role, catalyzes the reversible interconversion of serine and glycine with tetrahydrofolate (THF) serving as the one-carbon carrier. This reaction serves as the major source of one-carbon groups required for the biosynthesis of purines, thymidylate, methionine, and other important biomolecules. Also exhibits THF-independent aldolase activity toward beta-hydroxyamino acids, producing glycine and aldehydes, via a retro-aldol mechanism. This chain is Serine hydroxymethyltransferase, found in Anaeromyxobacter sp. (strain Fw109-5).